Here is a 776-residue protein sequence, read N- to C-terminus: Ent-8-alpha-hydroxylabd-13-en-15-yl diphosphate synthase CPS4, chloroplastic (776 aa).

A chloroplast-targeting transit peptide spans 1–60 (MSFASNATGFRIPLTTCVYPSPILRFNAKVGSGSSYGTTEAQRNMKCVDGIGRSRVVAVA). Lys226 contacts substrate. Residues Asp357 and Asp359 each coordinate Mg(2+). The DXDD motif signature appears at 357 to 360 (DSDD). Lys443 is a binding site for substrate.

This sequence belongs to the terpene synthase family. Mg(2+) serves as cofactor.

Its subcellular location is the plastid. It localises to the chloroplast. It catalyses the reaction ent-8alpha-hydroxylabd-13-en-15-yl diphosphate = (2E,6E,10E)-geranylgeranyl diphosphate + H2O. It functions in the pathway secondary metabolite biosynthesis; terpenoid biosynthesis. Involved in diterpenoid biosynthesis. Catalyzes the conversion of all-trans-geranylgeranyl diphosphate to ent-8alpha-hydroxylabd-13-en-15-yl diphosphate. The protein is Ent-8-alpha-hydroxylabd-13-en-15-yl diphosphate synthase CPS4, chloroplastic of Salvia miltiorrhiza (Chinese sage).